Consider the following 151-residue polypeptide: Large ribosomal subunit protein uL13 (151 aa).

Belongs to the universal ribosomal protein uL13 family. As to quaternary structure, part of the 50S ribosomal subunit.

This protein is one of the early assembly proteins of the 50S ribosomal subunit, although it is not seen to bind rRNA by itself. It is important during the early stages of 50S assembly. The protein is Large ribosomal subunit protein uL13 of Synechococcus sp. (strain JA-2-3B'a(2-13)) (Cyanobacteria bacterium Yellowstone B-Prime).